A 149-amino-acid chain; its full sequence is Protein-export protein SecB 2 (149 aa).

It belongs to the SecB family. In terms of assembly, homotetramer, a dimer of dimers. One homotetramer interacts with 1 SecA dimer.

It localises to the cytoplasm. Its function is as follows. One of the proteins required for the normal export of preproteins out of the cell cytoplasm. It is a molecular chaperone that binds to a subset of precursor proteins, maintaining them in a translocation-competent state. It also specifically binds to its receptor SecA. This chain is Protein-export protein SecB 2, found in Francisella tularensis subsp. tularensis (strain FSC 198).